Consider the following 349-residue polypeptide: Ribosomal RNA small subunit methyltransferase C (349 aa).

It belongs to the methyltransferase superfamily. RsmC family. Monomer.

It localises to the cytoplasm. The enzyme catalyses guanosine(1207) in 16S rRNA + S-adenosyl-L-methionine = N(2)-methylguanosine(1207) in 16S rRNA + S-adenosyl-L-homocysteine + H(+). Specifically methylates the guanine in position 1207 of 16S rRNA in the 30S particle. The sequence is that of Ribosomal RNA small subunit methyltransferase C from Psychromonas ingrahamii (strain DSM 17664 / CCUG 51855 / 37).